We begin with the raw amino-acid sequence, 155 residues long: Plastocyanin, chloroplastic (155 aa).

A chloroplast-targeting transit peptide spans 1–58 (MAALSSAAVSVPSFAAATPMRSSRSSRMVVRASLGKKAASAAVAMAAGAMLLGGSAMA). The Plastocyanin-like domain occupies 59–155 (QDVLLGANGG…AGMVGKVTVN (97 aa)). 4 residues coordinate Cu cation: H95, C140, H143, and M148.

It belongs to the plastocyanin family. Cu(2+) serves as cofactor.

It localises to the plastid. The protein resides in the chloroplast thylakoid membrane. Functionally, participates in electron transfer between P700 and the cytochrome b6-f complex in photosystem I. This Hordeum vulgare (Barley) protein is Plastocyanin, chloroplastic (PETE).